A 430-amino-acid polypeptide reads, in one-letter code: Phosphoglucosamine mutase (430 aa).

The active-site Phosphoserine intermediate is the serine 93. 4 residues coordinate Mg(2+): serine 93, aspartate 227, aspartate 229, and aspartate 231. Serine 93 is subject to Phosphoserine.

This sequence belongs to the phosphohexose mutase family. The cofactor is Mg(2+). In terms of processing, activated by phosphorylation.

It catalyses the reaction alpha-D-glucosamine 1-phosphate = D-glucosamine 6-phosphate. Catalyzes the conversion of glucosamine-6-phosphate to glucosamine-1-phosphate. The sequence is that of Phosphoglucosamine mutase from Thermosipho africanus (strain TCF52B).